The sequence spans 557 residues: Protein PECTIC ARABINOGALACTAN SYNTHESIS-RELATED (557 aa).

A disordered region spans residues 1-54 (MAELRHSSSLGSRSSSSPLRAAGDEDSSSPHVHDHSPNGGDDEDGRPRHPSRDR). Residues 1-79 (MAELRHSSSL…DPRVSPQKNK (79 aa)) lie on the Cytoplasmic side of the membrane. Low complexity predominate over residues 7-20 (SSSLGSRSSSSPLR). A compositionally biased stretch (basic and acidic residues) spans 45–54 (GRPRHPSRDR). The helical; Signal-anchor for type II membrane protein transmembrane segment at 80–100 (ISLLLILILAIASLISVYGII) threads the bilayer. At 101–557 (NHLNAPYLCK…NPLTPCMCKA (457 aa)) the chain is on the lumenal side. N-linked (GlcNAc...) asparagine glycans are attached at residues Asn156, Asn188, and Asn324. 336–338 (HLR) contacts substrate. Asn375 carries an N-linked (GlcNAc...) asparagine glycan.

The protein belongs to the glycosyltransferase GT106 family. In terms of tissue distribution, widely expressed with the highest expression in reproductive tissues and roots.

The protein localises to the golgi apparatus membrane. Its pathway is glycan metabolism; pectin biosynthesis. In terms of biological role, glycosyltransferase involved in the biosynthesis of pectic type-II arabinogalactans. This is Protein PECTIC ARABINOGALACTAN SYNTHESIS-RELATED from Arabidopsis thaliana (Mouse-ear cress).